The sequence spans 467 residues: Amino-acid permease RocE (467 aa).

12 consecutive transmembrane segments (helical) span residues 21–41 (FMISLGGVIGTGFFLGTGFTI), 47–67 (LGAVLSYLVGGFIMFLTMLCL), 87–107 (FISPAFGFAFGWLYWLGWAVT), 122–142 (WFPHIDVWIWCLVFAALMFIL), 162–182 (ILIILLFIILGGAAMFGLIDL), 207–227 (MLITMITVNFAFQGTELIGVA), 246–266 (VWRTLVFFVLSIIVIAGMIPW), 283–303 (IGIPYAADIMNFVILIALLSV), 336–356 (VPMYSLIVTMAVACLSLLTKF), 361–381 (TVYMVLLSLAGMSAQVGWITI), 409–429 (YPVLPLIGLTLNTVVLISLAF), and 435–455 (IALYCGVPFMIICYIIYHVVI).

Belongs to the amino acid-polyamine-organocation (APC) superfamily. Amino acid transporter (AAT) (TC 2.A.3.1) family.

It localises to the cell membrane. Its function is as follows. Putative transport protein involved in arginine degradative pathway. Probably transports arginine or ornithine. This Bacillus subtilis (strain 168) protein is Amino-acid permease RocE.